The chain runs to 343 residues: Anthranilate phosphoribosyltransferase (343 aa).

5-phospho-alpha-D-ribose 1-diphosphate is bound by residues Gly84, Gly87 to Asp88, Thr92, Asn94 to Thr97, Lys112 to Ser120, and Ser124. Gly84 contacts anthranilate. Mg(2+) is bound at residue Ser96. Asn115 serves as a coordination point for anthranilate. Residue Arg170 coordinates anthranilate. The Mg(2+) site is built by Asp229 and Glu230.

This sequence belongs to the anthranilate phosphoribosyltransferase family. In terms of assembly, homodimer. Mg(2+) serves as cofactor.

The enzyme catalyses N-(5-phospho-beta-D-ribosyl)anthranilate + diphosphate = 5-phospho-alpha-D-ribose 1-diphosphate + anthranilate. Its pathway is amino-acid biosynthesis; L-tryptophan biosynthesis; L-tryptophan from chorismate: step 2/5. In terms of biological role, catalyzes the transfer of the phosphoribosyl group of 5-phosphorylribose-1-pyrophosphate (PRPP) to anthranilate to yield N-(5'-phosphoribosyl)-anthranilate (PRA). This is Anthranilate phosphoribosyltransferase from Stenotrophomonas maltophilia (strain R551-3).